A 409-amino-acid chain; its full sequence is Nucleoprotein (409 aa).

Disordered stretches follow at residues 1–32, 46–69, 120–193, and 238–259; these read MASG…SSGN, SPPL…QQHG, GADT…SGAE, and VDQV…DKMN. Residues 15–31 show a composition bias toward low complexity; sequence PVIKLGGPKPPKVGSSG. An RNA-binding region spans residues 29-160; sequence SSGNASWFQA…GNFRWDFIPL (132 aa). One can recognise a CoV N NTD domain in the interval 31–156; the sequence is GNASWFQAIK…GGPDGNFRWD (126 aa). The segment covering 162–179 has biased composition (low complexity); it reads RGRSGKSTAASSAASSRA. Basic and acidic residues-rich tracts occupy residues 180–192 and 247–259; these read PSRE…RSGA and KGKE…DKMN. Residue Ser-190 is modified to Phosphoserine; by host. In terms of domain architecture, CoV N CTD spans 215 to 331; it reads TKAKADEMAH…QCVDGVGTRP (117 aa). The interval 226–333 is dimerization; the sequence is RYCKRTIPPG…VDGVGTRPKD (108 aa). Cys-320 and Cys-323 are joined by a disulfide. Positions 327–409 are disordered; it reads VGTRPKDDEP…GDSALGENEL (83 aa). Positions 341 to 354 are enriched in low complexity; that stretch reads RSSSRPATRTSSPA. Residues 358–367 are compositionally biased toward basic residues; sequence PRPKKEKKTK. Basic and acidic residues predominate over residues 368–384; that stretch reads KQDDEVDKALTSDEERN. The residue at position 378 (Thr-378) is a Phosphothreonine; by host. Position 379 is a phosphoserine; by host (Ser-379).

The protein belongs to the gammacoronavirus nucleocapsid protein family. In terms of assembly, homooligomer. Both monomeric and oligomeric forms interact with RNA. Interacts with protein M. Interacts with NSP3; this interaction serves to tether the genome to the newly translated replicase-transcriptase complex at a very early stage of infection. In terms of processing, ADP-ribosylated. The ADP-ribosylation is retained in the virion during infection. Post-translationally, phosphorylated on serine and threonine residues.

Its subcellular location is the virion. The protein resides in the host endoplasmic reticulum-Golgi intermediate compartment. It localises to the host Golgi apparatus. In terms of biological role, packages the positive strand viral genome RNA into a helical ribonucleocapsid (RNP) and plays a fundamental role during virion assembly through its interactions with the viral genome and membrane protein M. Plays an important role in enhancing the efficiency of subgenomic viral RNA transcription as well as viral replication. The sequence is that of Nucleoprotein from Gallus gallus (Chicken).